We begin with the raw amino-acid sequence, 294 residues long: Nitrogenase iron protein (294 aa).

Residue 11–18 (GKGGIGKS) participates in ATP binding. Cysteine 99 is a binding site for [4Fe-4S] cluster. Arginine 102 carries the post-translational modification ADP-ribosylarginine; by dinitrogenase reductase ADP-ribosyltransferase. Cysteine 133 contacts [4Fe-4S] cluster.

This sequence belongs to the NifH/BchL/ChlL family. In terms of assembly, homodimer. The cofactor is [4Fe-4S] cluster. The reversible ADP-ribosylation of Arg-102 inactivates the nitrogenase reductase and regulates nitrogenase activity.

It carries out the reaction N2 + 8 reduced [2Fe-2S]-[ferredoxin] + 16 ATP + 16 H2O = H2 + 8 oxidized [2Fe-2S]-[ferredoxin] + 2 NH4(+) + 16 ADP + 16 phosphate + 6 H(+). Functionally, the key enzymatic reactions in nitrogen fixation are catalyzed by the nitrogenase complex, which has 2 components: the iron protein and the molybdenum-iron protein. This chain is Nitrogenase iron protein (nifH), found in Bradyrhizobium diazoefficiens (strain JCM 10833 / BCRC 13528 / IAM 13628 / NBRC 14792 / USDA 110).